We begin with the raw amino-acid sequence, 506 residues long: ATP synthase subunit alpha (506 aa).

172-179 (GDRKTGKT) is a binding site for ATP.

It belongs to the ATPase alpha/beta chains family. In terms of assembly, F-type ATPases have 2 components, CF(1) - the catalytic core - and CF(0) - the membrane proton channel. CF(1) has five subunits: alpha(3), beta(3), gamma(1), delta(1), epsilon(1). CF(0) has three main subunits: a(1), b(2) and c(9-12). The alpha and beta chains form an alternating ring which encloses part of the gamma chain. CF(1) is attached to CF(0) by a central stalk formed by the gamma and epsilon chains, while a peripheral stalk is formed by the delta and b chains.

It localises to the cell membrane. The catalysed reaction is ATP + H2O + 4 H(+)(in) = ADP + phosphate + 5 H(+)(out). Produces ATP from ADP in the presence of a proton gradient across the membrane. The alpha chain is a regulatory subunit. The polypeptide is ATP synthase subunit alpha (Lactobacillus gasseri (strain ATCC 33323 / DSM 20243 / BCRC 14619 / CIP 102991 / JCM 1131 / KCTC 3163 / NCIMB 11718 / NCTC 13722 / AM63)).